Reading from the N-terminus, the 325-residue chain is DDB1- and CUL4-associated factor 7 homolog (325 aa).

WD repeat units lie at residues 62–104 (EHPY…RSIK), 115–155 (EFCA…AKTQ), 158–197 (AHDKEVFDIAFARGTDLFASVGADGSLRMFDLRNLEHSTI), and 247–287 (FHKS…KPIE).

Belongs to the WD repeat DCAF7 family.

The chain is DDB1- and CUL4-associated factor 7 homolog (wdr68) from Dictyostelium discoideum (Social amoeba).